Here is a 2090-residue protein sequence, read N- to C-terminus: Non-reducing polyketide synthase rdc1 (2090 aa).

An N-terminal acylcarrier protein transacylase (SAT) domain region spans residues 12–250 (FLVGDQVDSW…NPLNIHALQH (239 aa)). The 434-residue stretch at 375 to 808 (TGRIAIVGMS…GGNACLLLED (434 aa)) folds into the Ketosynthase family 3 (KS3) domain. Active-site for beta-ketoacyl synthase activity residues include cysteine 551, histidine 686, and histidine 726. The interval 912–1195 (IFVFSGQGSH…NQVCTQFVRA (284 aa)) is malonyl-CoA:ACP transacylase (MAT) domain. Serine 1003 acts as the For acyl/malonyl transferase activity in catalysis. The segment at 1293–1433 (QHVAKESSSN…LVVQKNVKAL (141 aa)) is N-terminal hotdog fold. Residues 1293 to 1607 (QHVAKESSSN…FVRISNALLQ (315 aa)) form the PKS/mFAS DH domain. The product template (PT) domain stretch occupies residues 1304 to 1604 (GKLEITFRAS…NLSFVRISNA (301 aa)). The tract at residues 1459–1607 (QGHWLKHDIF…FVRISNALLQ (149 aa)) is C-terminal hotdog fold. A disordered region spans residues 1615–1650 (SKPVGRGMAKQEKQEVPATTEVVRQPEKEESRHSVD). Positions 1638 to 1649 (RQPEKEESRHSV) are enriched in basic and acidic residues. The Carrier domain maps to 1649 to 1726 (VDTPSFSDVL…DIKRAFDILT (78 aa)). At serine 1686 the chain carries O-(pantetheine 4'-phosphoryl)serine. The thioesterase (TE) domain stretch occupies residues 1820–1964 (ADGTGSIATY…THQHLKALFA (145 aa)).

It functions in the pathway secondary metabolite biosynthesis. Its function is as follows. Non-reducing polyketide synthase; part of the gene cluster that mediates the biosynthesis of radicicol, a resorcylic acid lactone (RAL) that irreversibly inhibits the HSP90 molecular chaperone, an important target for cancer chemotherapy. The radicicol cluster encodes only two apparent post-PKS enzymes, a cytochrome P450 monooxygenase (rdc4) and a non-heme halogenase (rdc2) that could introduce the epoxide and the chlorine, respectively. If this cluster includes all the genes required for radicicol biosynthesis, the remaining structural features of radicicol are presumably generated by the PKSs rdc1 and rdc5. The C-2' ketone could arise if the R-PKS rdc5 and NR-PKS rdc1 each carry out four iterations, in contrast to the five iteration-three iteration split for the hypothemycin PKSs. The origin of the cis 5',6' double bond is not known. The radicicol R-PKS rdc5 ER domain may catalyze either double bond isomerization or reduction in the third iteration. The protein is Non-reducing polyketide synthase rdc1 of Metacordyceps chlamydosporia (Nematophagous fungus).